Reading from the N-terminus, the 55-residue chain is MAKPTTIKIRLNSTADTGHFYVTKKNARTMTEKMVVRKYDPVARKHVEYKEGKIK.

It belongs to the bacterial ribosomal protein bL33 family.

This Dinoroseobacter shibae (strain DSM 16493 / NCIMB 14021 / DFL 12) protein is Large ribosomal subunit protein bL33.